The following is a 229-amino-acid chain: Potassium/proton antiporter CemA (229 aa).

3 helical membrane-spanning segments follow: residues 7-27, 107-127, and 189-209; these read FTPL…SLLF, ILHF…SILG, and IISG…KYWI.

This sequence belongs to the CemA family.

The protein localises to the plastid. It localises to the chloroplast inner membrane. It carries out the reaction K(+)(in) + H(+)(out) = K(+)(out) + H(+)(in). In terms of biological role, contributes to K(+)/H(+) antiport activity by supporting proton efflux to control proton extrusion and homeostasis in chloroplasts in a light-dependent manner to modulate photosynthesis. Prevents excessive induction of non-photochemical quenching (NPQ) under continuous-light conditions. Indirectly promotes efficient inorganic carbon uptake into chloroplasts. The sequence is that of Potassium/proton antiporter CemA from Helianthus annuus (Common sunflower).